A 227-amino-acid chain; its full sequence is UPF0758 protein Pcar_0065 (227 aa).

Residues 105–227 form the MPN domain; sequence RYTSPQAVFA…YVSLADRGVL (123 aa). Residues His176, His178, and Asp189 each coordinate Zn(2+). A JAMM motif motif is present at residues 176–189; it reads HNHPSGDPSPSRED.

It belongs to the UPF0758 family.

The chain is UPF0758 protein Pcar_0065 from Syntrophotalea carbinolica (strain DSM 2380 / NBRC 103641 / GraBd1) (Pelobacter carbinolicus).